We begin with the raw amino-acid sequence, 717 residues long: SUN domain-containing protein 2 (717 aa).

The disordered stretch occupies residues 1 to 66 (MSRRSQRLTR…PQLGPSSDAH (66 aa)). The segment at 1 to 139 (MSRRSQRLTR…SSSGYSSEDD (139 aa)) is LMNA-binding. Over 1-212 (MSRRSQRLTR…LTRRFSSLKT (212 aa)) the chain is Nuclear. Ser12 is modified (phosphoserine). The segment covering 19-32 (SSSSGGSSVAGSQS) has biased composition (low complexity). Residues Ser38 and Ser54 each carry the phosphoserine modification. Thr107 carries the post-translational modification Phosphothreonine. Phosphoserine is present on residues Ser110, Ser113, Ser116, and Ser136. Residues 213 to 233 (FLWFLLPLLLLTCLTYGAWYF) form a helical membrane-spanning segment. The Perinuclear space portion of the chain corresponds to 234-717 (YPYGLQTFHP…RFRVHGEPAH (484 aa)). 3 coiled-coil regions span residues 273-296 (EQRV…EFSS), 348-440 (RRET…EEVG), and 475-506 (LLQR…SARE). The interval 507-717 (AAASLSLTLQ…RFRVHGEPAH (211 aa)) is sufficient for interaction with SYNE1 and SYNE2. One can recognise an SUN domain in the interval 555–716 (GASVISTRCS…YRFRVHGEPA (162 aa)). Cysteines 601 and 705 form a disulfide. A glycan (N-linked (GlcNAc...) asparagine) is linked at Asn636.

As to quaternary structure, core component of the LINC complex which is composed of inner nuclear membrane SUN domain-containing proteins coupled to outer nuclear membrane KASH domain-containing nesprins. SUN and KASH domain-containing proteins seem to bind each other promiscuously; however, differentially expression of LINC complex constituents is giving rise to specific assemblies. At least SUN1/2-containing core LINC complexes are proposed to be hexameric composed of three protomers of each KASH and SUN domain-containing protein. Interacts with SYNE2; the SUN2:SYNE2/KASH2 LINC complex is a heterohexamer; the homotrimeric cloverleave-like conformation of the SUN domain is a prerequisite for LINC complex formation in which three separate SYNE2/KASH2 peptides bind at the interface of adjacent SUN domains. Component of a probable SUN2:KASH5 LINC complex. Interacts with SYNE1 and SYNE3; probably forming respective LINC complexes. Interacts with A-type lamin. Interaction with lamins B1 and C is hardly detectable. Interacts with EMD and RAB5A. Interacts with TMEM43. Interacts with TMEM201. The disulfide bond with SYNE2 is required for stability of the SUN2:SYNE2/KASH2 LINC complex under tensile forces though not required for the interaction. The disulfide bond is proposed to be conserved in LINC complexes involved in force transmission. As to expression, widely expressed. Highly expressed in heart, lung and muscle. Weakly expressed in fetal heart. Slightly overexpressed in some heart tissues form patients with congenital heart defects.

The protein resides in the nucleus inner membrane. Its subcellular location is the nucleus envelope. It is found in the endosome membrane. Its function is as follows. As a component of the LINC (LInker of Nucleoskeleton and Cytoskeleton) complex, involved in the connection between the nuclear lamina and the cytoskeleton. The nucleocytoplasmic interactions established by the LINC complex play an important role in the transmission of mechanical forces across the nuclear envelope and in nuclear movement and positioning. Specifically, SYNE2 and SUN2 assemble in arrays of transmembrane actin-associated nuclear (TAN) lines which are bound to F-actin cables and couple the nucleus to retrograde actin flow during actin-dependent nuclear movement. Required for interkinetic nuclear migration (INM) and essential for nucleokinesis and centrosome-nucleus coupling during radial neuronal migration in the cerebral cortex and during glial migration. Required for nuclear migration in retinal photoreceptor progenitors implicating association with cytoplasmic dynein-dynactin and kinesin motor complexes, and probably B-type lamins; SUN1 and SUN2 seem to act redundantly. The SUN1/2:KASH5 LINC complex couples telomeres to microtubules during meiosis; SUN1 and SUN2 seem to act at least partial redundantly. Anchors chromosome movement in the prophase of meiosis and is involved in selective gene expression of coding and non-coding RNAs needed for gametogenesis. Required for telomere attachment to nuclear envelope and gametogenesis. May also function on endocytic vesicles as a receptor for RAB5-GDP and participate in the activation of RAB5. The polypeptide is SUN domain-containing protein 2 (Homo sapiens (Human)).